The following is a 321-amino-acid chain: MSKPIVMERGVKYRDADKMALIPVKNVATEREALLRKPEWMKIKLPADSTRIQGIKAAMRKNGLHSVCEEASCPNLAECFNHGTATFMILGAICTRRCPFCDVAHGRPVAPDANEPVKLAQTIADMALRYVVITSVDRDDLRDGGAQHFADCITAIREKSPQIKIETLVPDFRGRMDRALDILTATPPDVFNHNLENVPRIYRQVRPGADYNWSLKLLERFKEAHPEIPTKSGLMVGLGETNEEIIEVMRDLRRHGVTMLTLGQYLQPSRHHLPVQRYVSPDEFDEMKAEALAMGFTHAACGPFVRSSYHADLQAKGMEVK.

C68, C73, C79, C94, C98, C101, and S308 together coordinate [4Fe-4S] cluster. Positions 80–297 (FNHGTATFMI…KAEALAMGFT (218 aa)) constitute a Radical SAM core domain.

It belongs to the radical SAM superfamily. Lipoyl synthase family. The cofactor is [4Fe-4S] cluster.

It localises to the cytoplasm. The catalysed reaction is [[Fe-S] cluster scaffold protein carrying a second [4Fe-4S](2+) cluster] + N(6)-octanoyl-L-lysyl-[protein] + 2 oxidized [2Fe-2S]-[ferredoxin] + 2 S-adenosyl-L-methionine + 4 H(+) = [[Fe-S] cluster scaffold protein] + N(6)-[(R)-dihydrolipoyl]-L-lysyl-[protein] + 4 Fe(3+) + 2 hydrogen sulfide + 2 5'-deoxyadenosine + 2 L-methionine + 2 reduced [2Fe-2S]-[ferredoxin]. The protein operates within protein modification; protein lipoylation via endogenous pathway; protein N(6)-(lipoyl)lysine from octanoyl-[acyl-carrier-protein]: step 2/2. Catalyzes the radical-mediated insertion of two sulfur atoms into the C-6 and C-8 positions of the octanoyl moiety bound to the lipoyl domains of lipoate-dependent enzymes, thereby converting the octanoylated domains into lipoylated derivatives. The protein is Lipoyl synthase of Escherichia coli O9:H4 (strain HS).